Reading from the N-terminus, the 38-residue chain is Antimicrobial peptide 1 (38 aa).

In terms of processing, disulfide bonds. Expressed in flowers but not in leaves, seeds or roots (at protein level).

In terms of biological role, antimicrobial peptide. Active against fungal species B.cinerea (IC(50)=5.8 uM) and A.niger (IC(50)=5.6 uM) but not against F.oxysporum, F.graminearum, B.sorokinina and P.debaryanum at concentrations below 10 uM. Active against bacterial species P.syringae, B.subtilis and X.campestris. This is Antimicrobial peptide 1 from Taraxacum officinale (Common dandelion).